Consider the following 56-residue polypeptide: Large ribosomal subunit protein bL32 (56 aa).

A disordered region spans residues 1–21 (MAVQKNKPTRSKRGMRRSHDA). The span at 7 to 16 (KPTRSKRGMR) shows a compositional bias: basic residues.

This sequence belongs to the bacterial ribosomal protein bL32 family.

In Hamiltonella defensa subsp. Acyrthosiphon pisum (strain 5AT), this protein is Large ribosomal subunit protein bL32.